A 337-amino-acid polypeptide reads, in one-letter code: tRNA N6-adenosine threonylcarbamoyltransferase (337 aa).

2 residues coordinate Fe cation: His111 and His115. Residues 134–138 (LVSGG), Asp167, Gly180, and Asn272 each bind substrate. Asp300 contacts Fe cation.

The protein belongs to the KAE1 / TsaD family. Fe(2+) serves as cofactor.

The protein localises to the cytoplasm. The catalysed reaction is L-threonylcarbamoyladenylate + adenosine(37) in tRNA = N(6)-L-threonylcarbamoyladenosine(37) in tRNA + AMP + H(+). In terms of biological role, required for the formation of a threonylcarbamoyl group on adenosine at position 37 (t(6)A37) in tRNAs that read codons beginning with adenine. Is involved in the transfer of the threonylcarbamoyl moiety of threonylcarbamoyl-AMP (TC-AMP) to the N6 group of A37, together with TsaE and TsaB. TsaD likely plays a direct catalytic role in this reaction. This Escherichia coli O45:K1 (strain S88 / ExPEC) protein is tRNA N6-adenosine threonylcarbamoyltransferase.